Consider the following 123-residue polypeptide: Large ribosomal subunit protein bL12 (123 aa).

Belongs to the bacterial ribosomal protein bL12 family. In terms of assembly, homodimer. Part of the ribosomal stalk of the 50S ribosomal subunit. Forms a multimeric L10(L12)X complex, where L10 forms an elongated spine to which 2 to 4 L12 dimers bind in a sequential fashion. Binds GTP-bound translation factors.

Functionally, forms part of the ribosomal stalk which helps the ribosome interact with GTP-bound translation factors. Is thus essential for accurate translation. The protein is Large ribosomal subunit protein bL12 of Chromobacterium violaceum (strain ATCC 12472 / DSM 30191 / JCM 1249 / CCUG 213 / NBRC 12614 / NCIMB 9131 / NCTC 9757 / MK).